We begin with the raw amino-acid sequence, 985 residues long: MRILSLLFLLLLGFLAGNRVVSATDHGKTTDVTWDRYSLSVKGERLFVFSGEFHYQRLPVPEMWLDVFQKLRANGFNAISVYFFWGYHSASEGEFDFETGAHNIQRLFDYAKEAGIYVIARAGPYCNAETTAGGYALWAANGQMGNERTSDDAYYAKWRPWILEVGKIIAANQITNGGPVILNQHENELQETSYEADNTLVVYMKQIARVFQEAGIVVPSSHNEKGMRAVSWSTDHHDVGGAVNIYGLDSYPGGLSCTNPSSGFNLVRTYYQWFQNSSYTQPEYLPEFEGGWFQPWGGHDYDTCATELSPEFADVYYKNNIGSRVTLQNIYMVFGGTNWGHSAAPVVYTSYDYSAPLRETREIRDKLKQTKLIGLFTRVSSDLLKTHMEGNGTGYTSDSSIYTWALHNPDTNAGFYVLAHKTSSSRSVTEFSLNVTTSAGAISIPDIQLDGRQSKIIVTDYQFGKSSALLYSSAEVLTYANLDVDVLVLYLNVGQKGLFVFKDERSKLSFQTYGNTNVTASVSSHGTQYIYTQAEGVTAVKFSNGVLAYLLDKESAWNFFAPPTTSNPQVAPDEHILVQGPYLVRGVTINHDTVEIIGDNANTTSLEVYAGNLRVKVVKWNGKAIKSRRTAYGSLVGRAPGAEDARISPPSLDSWSAQDTLPDIQPDYDDSRWTVCNKTASVNAVPLLSLPVLYSGDYGYHAGTKVYRGRFDGRNVTGANVTVQNGVASGWAAWLNGQFVGGVAGAIDLAVTSAVLSFNSSLLHDRDNVLTVVTDYTGHDQNSVRPKGTQNPRGILGATLIGGGKFTSWRIQGNAGGEKNIDPVRGPINEGGLYGERMGWHLPGYKAPRSAAKSSPLDGISGAEGRFYTTTFTLKLDRDLDVPIGLQLGAPAGTQAVVQVFMNGYQFGHYLPHIGPQSLFPFPPGVINNRGENTLAISMWALTDAGAKLDQVELVAYGKYRSGFDFNQDWGYLQPQWKDNRRQYA.

An N-terminal signal peptide occupies residues 1 to 23; the sequence is MRILSLLFLLLLGFLAGNRVVSA. 5 residues coordinate substrate: Tyr82, Asn127, Ala128, Glu129, and Asn187. Glu188 serves as the catalytic Proton donor. Tyr251 is a binding site for substrate. A disulfide bond links Cys257 and Cys304. N-linked (GlcNAc...) asparagine glycosylation occurs at Asn276. Glu287 acts as the Nucleophile in catalysis. Tyr353 is a substrate binding site. Residues Asn391, Asn434, Asn517, Asn602, Asn677, Asn715, Asn720, and Asn759 are each glycosylated (N-linked (GlcNAc...) asparagine).

Belongs to the glycosyl hydrolase 35 family.

The protein resides in the secreted. It catalyses the reaction Hydrolysis of terminal non-reducing beta-D-galactose residues in beta-D-galactosides.. Functionally, cleaves beta-linked terminal galactosyl residues from gangliosides, glycoproteins, and glycosaminoglycans. The sequence is that of Probable beta-galactosidase C (lacC) from Aspergillus clavatus (strain ATCC 1007 / CBS 513.65 / DSM 816 / NCTC 3887 / NRRL 1 / QM 1276 / 107).